The following is a 227-amino-acid chain: Cytochrome c oxidase subunit 2 (227 aa).

At 1–14 (MAHRAQVGLQDATS) the chain is on the mitochondrial intermembrane side. A helical transmembrane segment spans residues 15-45 (PIMEELVIFHDHALMIIFLICFLVLYALFLT). The Mitochondrial matrix portion of the chain corresponds to 46-59 (LTTKLTNTNISDAQ). A helical membrane pass occupies residues 60 to 87 (EMETIWTTLPAIILILIALPSLRILYLT). The Mitochondrial intermembrane portion of the chain corresponds to 88–227 (DEINDPSFTI…IFEMGPVFAL (140 aa)). Residues H161, C196, E198, C200, H204, and M207 each contribute to the Cu cation site. E198 contacts Mg(2+).

The protein belongs to the cytochrome c oxidase subunit 2 family. As to quaternary structure, component of the cytochrome c oxidase (complex IV, CIV), a multisubunit enzyme composed of 14 subunits. The complex is composed of a catalytic core of 3 subunits MT-CO1, MT-CO2 and MT-CO3, encoded in the mitochondrial DNA, and 11 supernumerary subunits COX4I, COX5A, COX5B, COX6A, COX6B, COX6C, COX7A, COX7B, COX7C, COX8 and NDUFA4, which are encoded in the nuclear genome. The complex exists as a monomer or a dimer and forms supercomplexes (SCs) in the inner mitochondrial membrane with NADH-ubiquinone oxidoreductase (complex I, CI) and ubiquinol-cytochrome c oxidoreductase (cytochrome b-c1 complex, complex III, CIII), resulting in different assemblies (supercomplex SCI(1)III(2)IV(1) and megacomplex MCI(2)III(2)IV(2)). Found in a complex with TMEM177, COA6, COX18, COX20, SCO1 and SCO2. Interacts with TMEM177 in a COX20-dependent manner. Interacts with COX20. Interacts with COX16. Cu cation serves as cofactor.

Its subcellular location is the mitochondrion inner membrane. The catalysed reaction is 4 Fe(II)-[cytochrome c] + O2 + 8 H(+)(in) = 4 Fe(III)-[cytochrome c] + 2 H2O + 4 H(+)(out). Functionally, component of the cytochrome c oxidase, the last enzyme in the mitochondrial electron transport chain which drives oxidative phosphorylation. The respiratory chain contains 3 multisubunit complexes succinate dehydrogenase (complex II, CII), ubiquinol-cytochrome c oxidoreductase (cytochrome b-c1 complex, complex III, CIII) and cytochrome c oxidase (complex IV, CIV), that cooperate to transfer electrons derived from NADH and succinate to molecular oxygen, creating an electrochemical gradient over the inner membrane that drives transmembrane transport and the ATP synthase. Cytochrome c oxidase is the component of the respiratory chain that catalyzes the reduction of oxygen to water. Electrons originating from reduced cytochrome c in the intermembrane space (IMS) are transferred via the dinuclear copper A center (CU(A)) of subunit 2 and heme A of subunit 1 to the active site in subunit 1, a binuclear center (BNC) formed by heme A3 and copper B (CU(B)). The BNC reduces molecular oxygen to 2 water molecules using 4 electrons from cytochrome c in the IMS and 4 protons from the mitochondrial matrix. The chain is Cytochrome c oxidase subunit 2 (MT-CO2) from Pongo pygmaeus (Bornean orangutan).